A 726-amino-acid chain; its full sequence is NHL repeat-containing protein 2 (726 aa).

One can recognise a Thioredoxin domain in the interval 43-200 (QKVDGWEQDL…TSIALKYYKD (158 aa)). NHL repeat units lie at residues 212–254 (KLYK…VWKN), 265–307 (NPGR…IDLE), 335–369 (ISSP…IWAL), 409–439 (FAQP…VRTV), 461–505 (AFGD…VDPK), and 518–562 (TNNV…MDLE).

Monomer. Ubiquitous. Detected in heart, kidney, muscle, brain, lung, liver and in skin fibroblasts (at protein level).

The protein localises to the cytoplasm. It is found in the cytosol. In terms of biological role, required for normal embryonic development. The protein is NHL repeat-containing protein 2 (NHLRC2) of Homo sapiens (Human).